Reading from the N-terminus, the 97-residue chain is Conotoxin Cal6.1e (97 aa).

Positions M1–T22 are cleaved as a signal peptide. Residues D23 to I49 are disordered. Positions D23 to M60 are excised as a propeptide. Residues N31 to S45 are compositionally biased toward polar residues. 3 disulfide bridges follow: C71/C87, C78/C91, and C86/C96.

This sequence belongs to the conotoxin O1 superfamily. In terms of tissue distribution, expressed by the venom duct.

It localises to the secreted. In terms of biological role, probable neurotoxin with unknown target. Possibly targets ion channels. The polypeptide is Conotoxin Cal6.1e (Californiconus californicus (California cone)).